We begin with the raw amino-acid sequence, 776 residues long: Chitin synthase 1 (776 aa).

The next 6 membrane-spanning stretches (helical) occupy residues 451-471 (LVSLLFSFFSLSNFYLTFYFL), 487-507 (FWIFTLFNYLCIGVLTSLFIV), 523-543 (LIILLTICALYALVVGFVFVI), 558-578 (VLVSIVVSLLSTYGLYTLMSI), 695-714 (VVLFWMIANLVFIMTMVQVY), and 723-743 (IYLAFILWAVAVLALVRAIGS).

The protein belongs to the chitin synthase family.

It localises to the cell membrane. It carries out the reaction [(1-&gt;4)-N-acetyl-beta-D-glucosaminyl](n) + UDP-N-acetyl-alpha-D-glucosamine = [(1-&gt;4)-N-acetyl-beta-D-glucosaminyl](n+1) + UDP + H(+). With respect to regulation, requires proteolytic activation. In terms of biological role, polymerizes chitin, a structural polymer of the cell wall and septum, by transferring the sugar moiety of UDP-GlcNAc to the non-reducing end of the growing chitin polymer. Also involved in forming cross walls in the hyphal phase. The chain is Chitin synthase 1 (CHS1) from Candida albicans (Yeast).